The primary structure comprises 332 residues: MSKLEQTWFNECYTSLIDSPLAHWLQTLPALMDTWQRTAKHGEFDKWCRLLNKLPNTSPQQIDLSTSVTIGAKSDVDEYTQKQIEGLLRQFMPWRKGPFHVHGIHIDTEWRSDWKWDRVAPHISCLKGRNVLDVGCGSGYHMWRMLGEGANRVIGVDPTQLFFIQFHAIKQFIRNSYGPANNIHFLPMGIEDMQPLQAFDTVFSMGVLYHRKDPMAFLQQLKDQLRKGGELILETLVVDGDETTVLMAGERYAQMRNVWFLPSTDALTVWLSRLGFENIRVVDVNHTTLDEQRSTSWMDTQSLKDFLDPEDITRTIEGYPAPQRAVIVANKK.

Carboxy-S-adenosyl-L-methionine contacts are provided by residues lysine 96, tryptophan 110, lysine 115, glycine 135, 157 to 159 (DPT), 190 to 191 (IE), methionine 205, tyrosine 209, and arginine 324.

This sequence belongs to the class I-like SAM-binding methyltransferase superfamily. CmoB family. Homotetramer.

The catalysed reaction is carboxy-S-adenosyl-L-methionine + 5-hydroxyuridine(34) in tRNA = 5-carboxymethoxyuridine(34) in tRNA + S-adenosyl-L-homocysteine + H(+). Catalyzes carboxymethyl transfer from carboxy-S-adenosyl-L-methionine (Cx-SAM) to 5-hydroxyuridine (ho5U) to form 5-carboxymethoxyuridine (cmo5U) at position 34 in tRNAs. This chain is tRNA U34 carboxymethyltransferase, found in Alteromonas mediterranea (strain DSM 17117 / CIP 110805 / LMG 28347 / Deep ecotype).